A 350-amino-acid chain; its full sequence is tRNA uridine(34) hydroxylase (350 aa).

A Rhodanese domain is found at 146–240 (DDPDAVFIDM…YARRARAQGL (95 aa)). The active-site Cysteine persulfide intermediate is Cys-200. The span at 319–328 (RRRRAGRENG) shows a compositional bias: basic and acidic residues. A disordered region spans residues 319-350 (RRRRAGRENGNKIFNKSRGRLNSKLSIPDPAE).

It belongs to the TrhO family.

It carries out the reaction uridine(34) in tRNA + AH2 + O2 = 5-hydroxyuridine(34) in tRNA + A + H2O. Catalyzes oxygen-dependent 5-hydroxyuridine (ho5U) modification at position 34 in tRNAs. The protein is tRNA uridine(34) hydroxylase of Salmonella paratyphi B (strain ATCC BAA-1250 / SPB7).